The primary structure comprises 119 residues: Large ribosomal subunit protein uL18 (119 aa).

Belongs to the universal ribosomal protein uL18 family. In terms of assembly, part of the 50S ribosomal subunit; part of the 5S rRNA/L5/L18/L25 subcomplex. Contacts the 5S and 23S rRNAs.

In terms of biological role, this is one of the proteins that bind and probably mediate the attachment of the 5S RNA into the large ribosomal subunit, where it forms part of the central protuberance. This chain is Large ribosomal subunit protein uL18, found in Borrelia duttonii (strain Ly).